A 681-amino-acid polypeptide reads, in one-letter code: U3 small nucleolar ribonucleoprotein protein MPP10 (681 aa).

Serine 61, serine 120, and serine 140 each carry phosphoserine. Residues 109–139 adopt a coiled-coil conformation; the sequence is ECEDEECEEDASEVEADNQENLETDLDEEQL. Over residues 111–144 the composition is skewed to acidic residues; sequence EDEECEEDASEVEADNQENLETDLDEEQLSDEGG. Disordered regions lie at residues 111-202, 215-256, and 268-365; these read EDEE…SVVD, LEKV…GRQK, and YKDF…EKRQ. Positions 145–163 are enriched in basic and acidic residues; that stretch reads DVPKGRDRAKSSRKSDPRK. Serine 164, serine 168, and serine 172 each carry phosphoserine. A compositionally biased stretch (basic and acidic residues) spans 215–227; sequence LEKVEKEEEKRPD. 2 stretches are compositionally biased toward acidic residues: residues 228–248 and 273–322; these read GEEEDEEDIDLFEDIDSDESE and DPVE…EDEN. Phosphoserine occurs at positions 244, 247, 277, and 346. Positions 349–383 form a coiled coil; that stretch reads AVKQESDEVKSSFEKRQEKMNEKIASLEKELLDKK. Lysine 351 participates in a covalent cross-link: Glycyl lysine isopeptide (Lys-Gly) (interchain with G-Cter in SUMO2). The span at 352–365 shows a compositional bias: basic and acidic residues; the sequence is QESDEVKSSFEKRQ. Glycyl lysine isopeptide (Lys-Gly) (interchain with G-Cter in SUMO2) cross-links involve residues lysine 383 and lysine 395. A coiled-coil region spans residues 471 to 491; that stretch reads AEIYEQEYLKLNQQKTEEEDN. Lysine 556 participates in a covalent cross-link: Glycyl lysine isopeptide (Lys-Gly) (interchain with G-Cter in SUMO2). Positions 560-576 are enriched in basic and acidic residues; sequence KAGDLKTAAEKTATDKK. Residues 560–644 form a disordered region; it reads KAGDLKTAAE…RKDKPLKSSQ (85 aa). Residues 575-604 are a coiled coil; that stretch reads KKRERRKKKYQKRLKIKEKEKRKKLLEKNN. Positions 577–599 are enriched in basic residues; it reads RERRKKKYQKRLKIKEKEKRKKL. An N6-acetyllysine modification is found at lysine 609. The segment covering 630–640 has biased composition (basic and acidic residues); sequence LLKDERKDKPL. Glycyl lysine isopeptide (Lys-Gly) (interchain with G-Cter in SUMO2) cross-links involve residues lysine 632 and lysine 649. Positions 657–681 are disordered; it reads QINDAKQPEKIKKKKQDISVHKLKL. Basic and acidic residues predominate over residues 662–681; that stretch reads KQPEKIKKKKQDISVHKLKL.

Belongs to the MPP10 family. Part of the small subunit (SSU) processome, composed of more than 70 proteins and the RNA chaperone small nucleolar RNA (snoRNA) U3. Component of a heterotrimeric complex containing IMP3, IMP4 and MPHOSPH10. Interacts with IMP3 and IMP4. Post-translationally, phosphorylated in M (mitotic) phase.

Its subcellular location is the nucleus. It is found in the nucleolus. It localises to the chromosome. Functionally, component of the 60-80S U3 small nucleolar ribonucleoprotein (U3 snoRNP). Required for the early cleavages during pre-18S ribosomal RNA processing. Part of the small subunit (SSU) processome, first precursor of the small eukaryotic ribosomal subunit. During the assembly of the SSU processome in the nucleolus, many ribosome biogenesis factors, an RNA chaperone and ribosomal proteins associate with the nascent pre-rRNA and work in concert to generate RNA folding, modifications, rearrangements and cleavage as well as targeted degradation of pre-ribosomal RNA by the RNA exosome. The sequence is that of U3 small nucleolar ribonucleoprotein protein MPP10 (Mphosph10) from Mus musculus (Mouse).